A 552-amino-acid chain; its full sequence is MEKVQQTIRAPRGTELQTKGWVQEAALRMLMNNLDPEVAEKPEELVVYGGIGRAARNWESYNAIVDSLKTLESDETLLVQSGKPVAIFKSHEDAPRVLLANSNLVPKWANWDHFRELEKKGLMMYGQMTAGSWIYIGTQGILQGTYETFGEAARQHFDGSLKGTLTLTAGLGGMGGAQPLAVTMNGGVVIAIDVDKRSIDRRIEKRYCDKYTESLEEALAIANEYKEKKEPISIGLLGNAAEILPELVNRNIIPDLVTDQTSAHDPLNGYIPVGYTLEEAAKLREEDPERYVQLSKESMTKHVEAMLAMQEKGAITFDYGNNIRQVAFDEGLKNAFDFPGFVPAFIRPLFCEGKGPFRWVALSGDPEDIYKTDEVILREFADNEHLCNWIRMARQQVEFQGLPSRICWLGYGERAKFGRIINEMVANGELSAPIVIGRDHLDCGSVASPNRETEAMKDGSDAVADWPILNALINSVNGASWVSVHHGGGVGMGYSLHAGMVIVADGTEAAAKRIERVLTSDPGMGIVRHVDAGYDLAVETAKEKGVNIPMMK.

NAD(+)-binding positions include 49-50 (GG), glutamine 127, 173-175 (GMG), aspartate 193, 239-240 (NA), 260-264 (QTSAH), 270-271 (YI), and tyrosine 319. The active site involves cysteine 407. Residue glycine 489 participates in NAD(+) binding.

Belongs to the urocanase family. NAD(+) is required as a cofactor.

It localises to the cytoplasm. It catalyses the reaction 4-imidazolone-5-propanoate = trans-urocanate + H2O. It functions in the pathway amino-acid degradation; L-histidine degradation into L-glutamate; N-formimidoyl-L-glutamate from L-histidine: step 2/3. In terms of biological role, catalyzes the conversion of urocanate to 4-imidazolone-5-propionate. This is Urocanate hydratase from Bacillus cereus (strain G9842).